The chain runs to 381 residues: 1-deoxy-D-xylulose 5-phosphate reductoisomerase (381 aa).

The NADPH site is built by Thr-10, Gly-11, Ser-12, Ile-13, Gly-36, Lys-37, Asn-38, and Asn-122. A 1-deoxy-D-xylulose 5-phosphate-binding site is contributed by Lys-123. Glu-124 is a binding site for NADPH. Asp-148 provides a ligand contact to Mn(2+). Positions 149, 150, 173, and 196 each coordinate 1-deoxy-D-xylulose 5-phosphate. Glu-150 contacts Mn(2+). Gly-202 lines the NADPH pocket. The 1-deoxy-D-xylulose 5-phosphate site is built by Ser-209, Asn-214, Lys-215, and Glu-218. Glu-218 lines the Mn(2+) pocket.

Belongs to the DXR family. Mg(2+) serves as cofactor. It depends on Mn(2+) as a cofactor.

It catalyses the reaction 2-C-methyl-D-erythritol 4-phosphate + NADP(+) = 1-deoxy-D-xylulose 5-phosphate + NADPH + H(+). It functions in the pathway isoprenoid biosynthesis; isopentenyl diphosphate biosynthesis via DXP pathway; isopentenyl diphosphate from 1-deoxy-D-xylulose 5-phosphate: step 1/6. Functionally, catalyzes the NADPH-dependent rearrangement and reduction of 1-deoxy-D-xylulose-5-phosphate (DXP) to 2-C-methyl-D-erythritol 4-phosphate (MEP). This Desulfitobacterium hafniense (strain Y51) protein is 1-deoxy-D-xylulose 5-phosphate reductoisomerase.